Reading from the N-terminus, the 343-residue chain is Zinc finger CCCH domain-containing protein 1 (343 aa).

The disordered stretch occupies residues 1-102 (MSDSGEPKPS…PERSVFHYDS (102 aa)). The span at 7–25 (PKPSQQEEPLPQPAAQETQ) shows a compositional bias: low complexity. Residues 35-44 (KPTKSKNIRK) show a composition bias toward basic residues. Low complexity predominate over residues 79 to 91 (SSGPSKSSTTTSG). The C3H1-type zinc finger occupies 200–228 (DYQPDICKDYKETGYCGYGDSCKFLHDRG). Residues 249–268 (RNKAMGVEDEDDEADKDSDE) form a disordered region. A compositionally biased stretch (acidic residues) spans 255–268 (VEDEDDEADKDSDE). The RING-type zinc finger occupies 277–315 (CFICREPFVDPVVTKCKHYFCEHCALKHHTKNKKCFVCN).

The chain is Zinc finger CCCH domain-containing protein 1 from Arabidopsis thaliana (Mouse-ear cress).